Reading from the N-terminus, the 381-residue chain is MSQFFEAATPVAIPTNNTNGGSSDAGSAATGGAPVVGTTAQPTINHRLLLSLKEAAKIIGTKGSTISRIRAANSVKIGISEKVPGCSDRILSCAGNVINVANAIGDIVDVLNKRNPENEDAAEGEAEEHYYFHFLNHILPAPSKDEIRDLQQLEDIGYVRLIVANSHISSIIGKAGATIKSLINKHGVKIVASKDFLPASDERIIEIQGFPGSITNVLIEISEIILSDVDVRFSTERSYFPHLKKSSGEPTSPSTSSNTRIELKIPELYVGAIIGRGMNRIKNLKTFTKTNIVVERKDDDDKDENFRKFIITSKFPKNVKLAESMLLKNLNTEIEKRENYKRKLEAAEGDATVVTERSDSASFLEEKEEPQKNHDNKEEQS.

A disordered region spans residues M1–P34. Residues T15–A33 are compositionally biased toward low complexity. KH domains lie at T43–I107, I156–I221, and N258–L326. Residues L344–S381 are disordered. S358, S360, and S362 each carry phosphoserine. Residues E369 to S381 are compositionally biased toward basic and acidic residues.

The protein belongs to the HEK2 family. As to quaternary structure, binds RNA. Phosphorylated by the plasma membrane-Anchored casein kinase YCK1. Phosphorylation at its C-terminus reduces its RNA-binding capacity.

It is found in the cytoplasm. Its subcellular location is the P-body. The protein resides in the nucleus. It localises to the chromosome. The protein localises to the telomere. RNA-binding protein involved in the correct localization of transcripts in the cell. RNA localization is a widespread mechanism for achieving localized protein synthesis. Required for the asymmetric localization to the daughter cell nucleus of the ASH1 transcript, coding for a specific repressor of transcription. Overexpression inhibits translation of the ASH1 transcript. Involved in the stability of transcripts, like the MTL1 mRNA. Involved in structural and functional organization of telomeric chromatin and regulates silencing at the HMR locus. The protein is Heterogeneous nuclear rnp K-like protein 2 (HEK2) of Saccharomyces cerevisiae (strain JAY291) (Baker's yeast).